A 396-amino-acid chain; its full sequence is Elongation factor Tu (396 aa).

The region spanning 10–206 (KPHVNIGTIG…ACDTYIPAPV (197 aa)) is the tr-type G domain. The G1 stretch occupies residues 19 to 26 (GHVDHGKT). 19-26 (GHVDHGKT) provides a ligand contact to GTP. A Mg(2+)-binding site is contributed by Thr26. The segment at 60 to 64 (GITIS) is G2. The tract at residues 81–84 (DCPG) is G3. Residues 81-85 (DCPGH) and 136-139 (NKVD) each bind GTP. Positions 136-139 (NKVD) are G4. The interval 174-176 (SAL) is G5.

This sequence belongs to the TRAFAC class translation factor GTPase superfamily. Classic translation factor GTPase family. EF-Tu/EF-1A subfamily. Monomer.

It is found in the cytoplasm. The catalysed reaction is GTP + H2O = GDP + phosphate + H(+). GTP hydrolase that promotes the GTP-dependent binding of aminoacyl-tRNA to the A-site of ribosomes during protein biosynthesis. The chain is Elongation factor Tu from Bdellovibrio bacteriovorus (strain ATCC 15356 / DSM 50701 / NCIMB 9529 / HD100).